The primary structure comprises 321 residues: F420-non-reducing hydrogenase iron-sulfur subunit G (321 aa).

It belongs to the [NiFe]/[NiFeSe] hydrogenase small subunit family. The F420-non-reducing hydrogenase is composed of three subunits; MvhA, MvhD and MvhG. It forms a complex with the heterodisulfide reductase (Hdr).

The protein resides in the cytoplasm. Part of a complex that provides reducing equivalents for heterodisulfide reductase. This Archaeoglobus profundus (strain DSM 5631 / JCM 9629 / NBRC 100127 / Av18) protein is F420-non-reducing hydrogenase iron-sulfur subunit G (mvhG).